A 313-amino-acid polypeptide reads, in one-letter code: Short-chain dehydrogenase/reductase family 9C member 7 (313 aa).

NADP(+) is bound at residue 29–53; that stretch reads FITGCDSGFGNLLAKQLVDRGMQVL. Serine 160 lines the substrate pocket. Tyrosine 172 (proton acceptor) is an active-site residue. The residue at position 185 (serine 185) is a Phosphoserine.

The protein belongs to the short-chain dehydrogenases/reductases (SDR) family. As to expression, expressed in the skin. Expressed in granular and cornified layers of the epidermis (at protein level). Highly expressed in liver.

Its subcellular location is the cytoplasm. It carries out the reaction a N-[omega-(9R,10R)-epoxy-(13R)-hydroxy-(11E)-octadecenoyloxy]acyl-beta-D-glucosyl-(1&lt;-&gt;1)-sphing-4E-enine + NAD(+) = a N-[omega-(9R,10R)-epoxy-13-oxo-(11E)-octadecenoyloxy]acyl-beta-D-glucosyl-(1&lt;-&gt;1)-sphing-4E-enine + NADH + H(+). It catalyses the reaction a N-[omega-(9R,10R)-epoxy-(13R)-hydroxy-(11E)-octadecenoyloxy]-acylsphing-4E-enine + NAD(+) = a N-[omega-(9R,10R)-epoxy-13-oxo-(11E)-octadecenoyloxy]-acylsphing-4E-enine + NADH + H(+). In terms of biological role, plays a crucial role in the formation of the epidermal permeability barrier. Catalyzes the NAD+-dependent dehydrogenation of the linoleate 9,10-trans-epoxy-11E-13-alcohol esterified in omega-O-acylceramides (such as in N-[omega-(9R,10R)-epoxy-(13R)-hydroxy-(11E)-octadecenoyloxy]-acylsphing-4E-enine) to the corresponding 13-ketone, the reactive moiety required for binding of epidermal ceramides to proteins. Displays weak conversion of all-trans-retinal to all-trans-retinol in the presence of NADH. Has apparently no steroid dehydrogenase activity. The sequence is that of Short-chain dehydrogenase/reductase family 9C member 7 (SDR9C7) from Homo sapiens (Human).